Here is a 373-residue protein sequence, read N- to C-terminus: Queuine tRNA-ribosyltransferase (373 aa).

The Proton acceptor role is filled by Asp-90. Residues 90-94 (DSGGF), Asp-144, Gln-193, and Gly-220 each bind substrate. Residues 251–257 (GVGTPED) form an RNA binding region. The active-site Nucleophile is Asp-270. The tract at residues 275 to 279 (TRNAR) is RNA binding; important for wobble base 34 recognition. Cys-308, Cys-310, Cys-313, and His-339 together coordinate Zn(2+).

The protein belongs to the queuine tRNA-ribosyltransferase family. In terms of assembly, homodimer. Within each dimer, one monomer is responsible for RNA recognition and catalysis, while the other monomer binds to the replacement base PreQ1. The cofactor is Zn(2+).

It carries out the reaction 7-aminomethyl-7-carbaguanine + guanosine(34) in tRNA = 7-aminomethyl-7-carbaguanosine(34) in tRNA + guanine. It functions in the pathway tRNA modification; tRNA-queuosine biosynthesis. In terms of biological role, catalyzes the base-exchange of a guanine (G) residue with the queuine precursor 7-aminomethyl-7-deazaguanine (PreQ1) at position 34 (anticodon wobble position) in tRNAs with GU(N) anticodons (tRNA-Asp, -Asn, -His and -Tyr). Catalysis occurs through a double-displacement mechanism. The nucleophile active site attacks the C1' of nucleotide 34 to detach the guanine base from the RNA, forming a covalent enzyme-RNA intermediate. The proton acceptor active site deprotonates the incoming PreQ1, allowing a nucleophilic attack on the C1' of the ribose to form the product. After dissociation, two additional enzymatic reactions on the tRNA convert PreQ1 to queuine (Q), resulting in the hypermodified nucleoside queuosine (7-(((4,5-cis-dihydroxy-2-cyclopenten-1-yl)amino)methyl)-7-deazaguanosine). The sequence is that of Queuine tRNA-ribosyltransferase from Campylobacter jejuni subsp. jejuni serotype O:6 (strain 81116 / NCTC 11828).